Consider the following 259-residue polypeptide: Flap endonuclease Xni (259 aa).

Residue Asp-109 participates in Mg(2+) binding. In terms of domain architecture, 5'-3' exonuclease spans 165-255 (VKPQQLSDYW…FNLQDLRFTA (91 aa)). Residues Leu-176, Ile-187, and Ile-190 each contribute to the K(+) site. The tract at residues 189–194 (GIGPKA) is interaction with DNA.

This sequence belongs to the Xni family. Mg(2+) serves as cofactor. K(+) is required as a cofactor.

Has flap endonuclease activity. During DNA replication, flap endonucleases cleave the 5'-overhanging flap structure that is generated by displacement synthesis when DNA polymerase encounters the 5'-end of a downstream Okazaki fragment. The polypeptide is Flap endonuclease Xni (Vibrio vulnificus (strain YJ016)).